A 505-amino-acid polypeptide reads, in one-letter code: Maturase K (505 aa).

It belongs to the intron maturase 2 family. MatK subfamily.

The protein resides in the plastid. It localises to the chloroplast. Its function is as follows. Usually encoded in the trnK tRNA gene intron. Probably assists in splicing its own and other chloroplast group II introns. In Coffea arabica (Arabian coffee), this protein is Maturase K.